Here is a 355-residue protein sequence, read N- to C-terminus: NAD-dependent protein deacylase sirtuin-6 (355 aa).

Ser2 is modified (N-acetylserine). A Phosphoserine; by MAPK8 modification is found at Ser10. In terms of domain architecture, Deacetylase sirtuin-type spans 27-272; sequence PEELERKVWE…TRLMKHLGLE (246 aa). An N6-acetyllysine modification is found at Lys33. Positions 53, 57, 64, 65, 71, 113, and 133 each coordinate NAD(+). The active-site Proton acceptor is His133. Cys141, Cys144, and Cys166 together coordinate Zn(2+). Residue Lys170 forms a Glycyl lysine isopeptide (Lys-Gly) (interchain with G-Cter in ubiquitin) linkage. Cys177 provides a ligand contact to Zn(2+). The NAD(+) site is built by Gly214, Ser216, Asn240, Gln242, and Val258. Positions 284–355 are disordered; the sequence is RALPPLPRPP…KRVKAKAVPS (72 aa). Residues 287 to 296 show a composition bias toward pro residues; sequence PPLPRPPTPK. The residue at position 294 (Thr294) is a Phosphothreonine. Residues Ser303 and Ser330 each carry the phosphoserine modification. The segment covering 343 to 355 has biased composition (basic residues); it reads RPPKRVKAKAVPS.

This sequence belongs to the sirtuin family. Class IV subfamily. Homodimer; binds to nucleosomes and DNA ends as a homodimer. Interacts with RELA; interferes with RELA binding to target DNA. Interacts with SMARCA5; promoting recruitment of SMARCA5/SNF2H to double-strand breaks (DSBs) sites. Interacts with the mTORC2 complex; preventing the ability of SIRT6 to deacetylate FOXO1. Interacts with the CLOCK-BMAL1 complex; recruited by the CLOCK-BMAL1 complex to regulate expression of clock-controlled genes. Interacts with CSNK2A2; preventing CSNK2A2 localization to the nucleus. As to quaternary structure, (Microbial infection) Interacts with Kaposi's sarcoma-associated herpesvirus protein VIRF-1; this interaction prevents SIRT6 deubiquitination by USP10. Zn(2+) serves as cofactor. In terms of processing, acetylated at Lys-33. Deacetylation at Lys-33 by SIRT1 promotes homomultimerization and binding to double-strand breaks (DSBs) sites. Phosphorylation at Ser-10 by MAPK8/JNK1 in response to oxidative stress stimulates the mono-ADP-ribosyltransferase activity on PARP1, leading to PARP1 recruitment to double-strand breaks (DSBs). Post-translationally, monoubiquitinated at Lys-170 by STUB1/CHIP, preventing its degradation by the proteasome. Deubiquitinated by USP10, also preventing its degradation by the proteasome. In terms of processing, sumoylated, leading to specifically decrease ability to deacetylate histone H3 at 'Lys-56' (H3K56ac).

It localises to the nucleus. The protein resides in the chromosome. The protein localises to the telomere. It is found in the endoplasmic reticulum. It carries out the reaction N(6)-acetyl-L-lysyl-[protein] + NAD(+) + H2O = 2''-O-acetyl-ADP-D-ribose + nicotinamide + L-lysyl-[protein]. The catalysed reaction is N(6)-tetradecanoyl-L-lysyl-[protein] + NAD(+) + H2O = 2''-O-tetradecanoyl-ADP-D-ribose + nicotinamide + L-lysyl-[protein]. The enzyme catalyses N(6)-hexadecanoyl-L-lysyl-[protein] + NAD(+) + H2O = 2''-O-hexadecanoyl-ADP-D-ribose + nicotinamide + L-lysyl-[protein]. It catalyses the reaction L-lysyl-[protein] + NAD(+) = N(6)-(ADP-D-ribosyl)-L-lysyl-[protein] + nicotinamide + H(+). It carries out the reaction L-arginyl-[protein] + NAD(+) = N(omega)-(ADP-D-ribosyl)-L-arginyl-[protein] + nicotinamide + H(+). Compared to the defatty-acylase activity, the protein deacetylase activity is weak in vitro, and requires activation. The histone deacetylase activity is strongly activated upon binding to nucleosomes and chromatin in vivo. Two molecules of SIRT6 associate with the acidic patch of one nucleosome, while the C-terminal disordered region of SIRT6 associates with nucleosomal DNA, leading to efficient histone deacetylation. The protein-lysine deacetylase activity is also activated by long-chain free fatty-acids. The histone deacetylase activity is specifically repressed by long non-coding RNA lncPRESS1, which binds to SIRT6 and prevents chromatin-binding, thereby promoting stem cell pluripotency. Due to its essential role as tumor suppressor and involvement in DNA repair and life span, extensive research is made for the identification of small compound regulators of SIRT6. Nitro-fatty acids (nitro-oleic acid and nitro-conjugated linoleic acid) strongly stimulate the protein-lysine deacetylase activity by forming a covalent Michael adduct formation with Cys-18. Activated by UBCS039 (4-(pyridin-3-yl)-4,5- dihydropyrrolo[1,2-a]quinoxaline). Inhibited by non-selective hydroxamate trichostatin A inhibitor. Deacetylase activity is activated by fluvastatin and quercetin-based compounds. The protein-lysine deacetylase activity, but not the defatty-acylase activity, is specifically activated by MDL-800 and MDL-801 activators in vivo, enhancing the histone deacetylase and tumor suppressor activities. MDL-800 and MDL-801 selectively activate SIRT6 and not other members of the sirtuin family. The binding-mode of MDL-801 is however subject to discussion. NAD-dependent protein deacetylase, deacylase and mono-ADP-ribosyltransferase that plays an essential role in DNA damage repair, telomere maintenance, metabolic homeostasis, inflammation, tumorigenesis and aging. Displays protein-lysine deacetylase or defatty-acylase (demyristoylase and depalmitoylase) activity, depending on the context. Acts as a key histone deacetylase by catalyzing deacetylation of histone H3 at 'Lys-9', 'Lys-18' and 'Lys-56' (H3K9ac, H3K18ac and H3K56ac, respectively), suppressing target gene expression of several transcription factors, including NF-kappa-B. Acts as an inhibitor of transcription elongation by mediating deacetylation of H3K9ac and H3K56ac, preventing release of NELFE from chromatin and causing transcriptional pausing. Involved in DNA repair by promoting double-strand break (DSB) repair: acts as a DSB sensor by recognizing and binding DSB sites, leading to (1) recruitment of DNA repair proteins, such as SMARCA5/SNF2H, and (2) deacetylation of histone H3K9ac and H3K56ac. SIRT6 participation to DSB repair is probably involved in extension of life span. Also promotes DNA repair by deacetylating non-histone proteins, such as DDB2 and p53/TP53. Specifically deacetylates H3K18ac at pericentric heterochromatin, thereby maintaining pericentric heterochromatin silencing at centromeres and protecting against genomic instability and cellular senescence. Involved in telomere maintenance by catalyzing deacetylation of histone H3 in telomeric chromatin, regulating telomere position effect and telomere movement in response to DNA damage. Required for embryonic stem cell differentiation by mediating histone deacetylation of H3K9ac. Plays a major role in metabolism by regulating processes such as glycolysis, gluconeogenesis, insulin secretion and lipid metabolism. Inhibits glycolysis via histone deacetylase activity and by acting as a corepressor of the transcription factor HIF1A, thereby controlling the expression of multiple glycolytic genes. Has tumor suppressor activity by repressing glycolysis, thereby inhibiting the Warburg effect. Also regulates glycolysis and tumorigenesis by mediating deacetylation and nuclear export of non-histone proteins, such as isoform M2 of PKM (PKM2). Acts as a negative regulator of gluconeogenesis by mediating deacetylation of non-histone proteins, such as FOXO1 and KAT2A/GCN5. Promotes beta-oxidation of fatty acids during fasting by catalyzing deacetylation of NCOA2, inducing coactivation of PPARA. Acts as a regulator of lipid catabolism in brown adipocytes, both by catalyzing deacetylation of histones and non-histone proteins, such as FOXO1. Also acts as a regulator of circadian rhythms, both by regulating expression of clock-controlled genes involved in lipid and carbohydrate metabolism, and by catalyzing deacetylation of PER2. The defatty-acylase activity is specifically involved in regulation of protein secretion. Has high activity toward long-chain fatty acyl groups and mediates protein-lysine demyristoylation and depalmitoylation of target proteins, such as RRAS2 and TNF, thereby regulating their secretion. Also acts as a mono-ADP-ribosyltransferase by mediating mono-ADP-ribosylation of PARP1, TRIM28/KAP1 or SMARCC2/BAF170. Mono-ADP-ribosyltransferase activity is involved in DNA repair, cellular senescence, repression of LINE-1 retrotransposon elements and regulation of transcription. The sequence is that of NAD-dependent protein deacylase sirtuin-6 from Homo sapiens (Human).